We begin with the raw amino-acid sequence, 267 residues long: MEMO1 family protein MA_0601 (267 aa).

This sequence belongs to the MEMO1 family.

The protein is MEMO1 family protein MA_0601 of Methanosarcina acetivorans (strain ATCC 35395 / DSM 2834 / JCM 12185 / C2A).